Consider the following 122-residue polypeptide: Nitrogen fixation nifHD region GlnB-like protein 2 (122 aa).

This sequence belongs to the P(II) protein family.

In terms of biological role, could be involved in the regulation of nitrogen fixation. The sequence is that of Nitrogen fixation nifHD region GlnB-like protein 2 (glnBB) from Methanobacterium ivanovii.